We begin with the raw amino-acid sequence, 403 residues long: L-cysteine:1D-myo-inositol 2-amino-2-deoxy-alpha-D-glucopyranoside ligase (403 aa).

Cys-43 lines the Zn(2+) pocket. L-cysteinyl-5'-AMP-binding positions include Cys-43 to Thr-46, Thr-58, Asn-81 to Thr-83, and Trp-223. The 'HIGH' region signature appears at Ile-45–His-55. A Zn(2+)-binding site is contributed by Cys-227. Residue Gly-245–Asp-247 coordinates L-cysteinyl-5'-AMP. His-252 contributes to the Zn(2+) binding site. Val-278 lines the L-cysteinyl-5'-AMP pocket. A 'KMSKS' region motif is present at residues Lys-284–Ser-288.

Belongs to the class-I aminoacyl-tRNA synthetase family. MshC subfamily. In terms of assembly, monomer. Zn(2+) is required as a cofactor.

The catalysed reaction is 1D-myo-inositol 2-amino-2-deoxy-alpha-D-glucopyranoside + L-cysteine + ATP = 1D-myo-inositol 2-(L-cysteinylamino)-2-deoxy-alpha-D-glucopyranoside + AMP + diphosphate + H(+). Its function is as follows. Catalyzes the ATP-dependent condensation of GlcN-Ins and L-cysteine to form L-Cys-GlcN-Ins. This Acidothermus cellulolyticus (strain ATCC 43068 / DSM 8971 / 11B) protein is L-cysteine:1D-myo-inositol 2-amino-2-deoxy-alpha-D-glucopyranoside ligase.